Consider the following 189-residue polypeptide: Crossover junction endodeoxyribonuclease RuvC (189 aa).

Active-site residues include D9, E70, and D143. Residues D9, E70, and D143 each contribute to the Mg(2+) site. Residues 162 to 178 show a composition bias toward low complexity; the sequence is MGAASGNSSLTPAQKAW. The segment at 162–189 is disordered; the sequence is MGAASGNSSLTPAQKAWADAEAKARRKR. Residues 179 to 189 show a composition bias toward basic and acidic residues; the sequence is ADAEAKARRKR.

It belongs to the RuvC family. As to quaternary structure, homodimer which binds Holliday junction (HJ) DNA. The HJ becomes 2-fold symmetrical on binding to RuvC with unstacked arms; it has a different conformation from HJ DNA in complex with RuvA. In the full resolvosome a probable DNA-RuvA(4)-RuvB(12)-RuvC(2) complex forms which resolves the HJ. The cofactor is Mg(2+).

The protein localises to the cytoplasm. It carries out the reaction Endonucleolytic cleavage at a junction such as a reciprocal single-stranded crossover between two homologous DNA duplexes (Holliday junction).. In terms of biological role, the RuvA-RuvB-RuvC complex processes Holliday junction (HJ) DNA during genetic recombination and DNA repair. Endonuclease that resolves HJ intermediates. Cleaves cruciform DNA by making single-stranded nicks across the HJ at symmetrical positions within the homologous arms, yielding a 5'-phosphate and a 3'-hydroxyl group; requires a central core of homology in the junction. The consensus cleavage sequence is 5'-(A/T)TT(C/G)-3'. Cleavage occurs on the 3'-side of the TT dinucleotide at the point of strand exchange. HJ branch migration catalyzed by RuvA-RuvB allows RuvC to scan DNA until it finds its consensus sequence, where it cleaves and resolves the cruciform DNA. This chain is Crossover junction endodeoxyribonuclease RuvC, found in Paenarthrobacter aurescens (strain TC1).